Reading from the N-terminus, the 466-residue chain is CBL-interacting protein kinase 20 (466 aa).

The Protein kinase domain maps to 12-276; that stretch reads YELGRSLGHG…IDELVKHPWF (265 aa). Residues 18–26 and K41 each bind ATP; that span reads LGHGTFSKV. D139 functions as the Proton acceptor in the catalytic mechanism. The interval 162–191 is activation loop; the sequence is DFGLSALSASRRHDGLLHTTCGTPSYVAPE. Residues 297–329 form the NAF domain; the sequence is KPANAAMNMKPASLNAFDIISLSQGFDLSGMFC. The segment at 337 to 366 is PPI; it reads TQDQLFVTGKPATAIVSRLEEIAETEHFTV. Positions 446–466 are disordered; that stretch reads ASEKNQLPAVSEVSPLSSPRN.

This sequence belongs to the protein kinase superfamily. CAMK Ser/Thr protein kinase family. SNF1 subfamily. Mn(2+) serves as cofactor.

The catalysed reaction is L-seryl-[protein] + ATP = O-phospho-L-seryl-[protein] + ADP + H(+). It catalyses the reaction L-threonyl-[protein] + ATP = O-phospho-L-threonyl-[protein] + ADP + H(+). Its function is as follows. CIPK serine-threonine protein kinases interact with CBL proteins. Binding of a CBL protein to the regulatory NAF domain of CIPK protein lead to the activation of the kinase in a calcium-dependent manner. This chain is CBL-interacting protein kinase 20 (CIPK20), found in Oryza sativa subsp. japonica (Rice).